The following is a 329-amino-acid chain: DNA-directed RNA polymerase subunit alpha (329 aa).

An alpha N-terminal domain (alpha-NTD) region spans residues 1 to 234 (MQGSVTEFLK…EQLDAFVELR (234 aa)). Residues 248-329 (FDPILLRPVD…WPPASLVDDL (82 aa)) are alpha C-terminal domain (alpha-CTD).

It belongs to the RNA polymerase alpha chain family. In terms of assembly, homodimer. The RNAP catalytic core consists of 2 alpha, 1 beta, 1 beta' and 1 omega subunit. When a sigma factor is associated with the core the holoenzyme is formed, which can initiate transcription.

It catalyses the reaction RNA(n) + a ribonucleoside 5'-triphosphate = RNA(n+1) + diphosphate. Its function is as follows. DNA-dependent RNA polymerase catalyzes the transcription of DNA into RNA using the four ribonucleoside triphosphates as substrates. The sequence is that of DNA-directed RNA polymerase subunit alpha from Shewanella denitrificans (strain OS217 / ATCC BAA-1090 / DSM 15013).